A 361-amino-acid polypeptide reads, in one-letter code: Beta-hexosaminidase (361 aa).

Residues D69, R77, R144, and K174–H175 contribute to the substrate site. H187 acts as the Proton donor/acceptor in catalysis. The active-site Nucleophile is D258.

It belongs to the glycosyl hydrolase 3 family. NagZ subfamily.

The protein resides in the cytoplasm. It carries out the reaction Hydrolysis of terminal non-reducing N-acetyl-D-hexosamine residues in N-acetyl-beta-D-hexosaminides.. It participates in cell wall biogenesis; peptidoglycan recycling. In terms of biological role, plays a role in peptidoglycan recycling by cleaving the terminal beta-1,4-linked N-acetylglucosamine (GlcNAc) from peptide-linked peptidoglycan fragments, giving rise to free GlcNAc, anhydro-N-acetylmuramic acid and anhydro-N-acetylmuramic acid-linked peptides. This chain is Beta-hexosaminidase, found in Neisseria gonorrhoeae (strain NCCP11945).